Consider the following 73-residue polypeptide: Nodulin-1 (73 aa).

An N-terminal signal peptide occupies residues 1–23 (MERKTLASLCFFLIVLLAAQVVA). Intrachain disulfides connect Cys-39–Cys-64, Cys-49–Cys-71, and Cys-53–Cys-73.

Expressed in nodules, but not in leaves, stems, flowers and roots. In developing nodules, expressed close to the infection threads.

The protein localises to the secreted. Nodulation-related protein probably involved in the infection process. The polypeptide is Nodulin-1 (N1) (Medicago truncatula (Barrel medic)).